The following is a 429-amino-acid chain: Enolase (429 aa).

Glutamine 163 is a (2R)-2-phosphoglycerate binding site. Glutamate 205 acts as the Proton donor in catalysis. The Mg(2+) site is built by aspartate 242, glutamate 285, and aspartate 312. (2R)-2-phosphoglycerate contacts are provided by lysine 337, arginine 366, serine 367, and lysine 388. Residue lysine 337 is the Proton acceptor of the active site.

This sequence belongs to the enolase family. It depends on Mg(2+) as a cofactor.

Its subcellular location is the cytoplasm. The protein resides in the secreted. The protein localises to the cell surface. The catalysed reaction is (2R)-2-phosphoglycerate = phosphoenolpyruvate + H2O. Its pathway is carbohydrate degradation; glycolysis; pyruvate from D-glyceraldehyde 3-phosphate: step 4/5. In terms of biological role, catalyzes the reversible conversion of 2-phosphoglycerate (2-PG) into phosphoenolpyruvate (PEP). It is essential for the degradation of carbohydrates via glycolysis. This is Enolase from Azoarcus sp. (strain BH72).